The following is a 364-amino-acid chain: Dihydroorotate dehydrogenase (quinone) (364 aa).

FMN is bound by residues alanine 61 to lysine 65 and threonine 85. Lysine 65 serves as a coordination point for substrate. Residue asparagine 110 to phenylalanine 114 participates in substrate binding. 2 residues coordinate FMN: asparagine 139 and asparagine 170. Residue asparagine 170 coordinates substrate. Residue serine 173 is the Nucleophile of the active site. Position 175 (asparagine 175) interacts with substrate. 2 residues coordinate FMN: lysine 215 and serine 243. Asparagine 244 to threonine 245 is a binding site for substrate. Residues glycine 266, glycine 295, and tyrosine 316–threonine 317 each bind FMN.

It belongs to the dihydroorotate dehydrogenase family. Type 2 subfamily. Monomer. The cofactor is FMN.

It localises to the cell membrane. The catalysed reaction is (S)-dihydroorotate + a quinone = orotate + a quinol. It functions in the pathway pyrimidine metabolism; UMP biosynthesis via de novo pathway; orotate from (S)-dihydroorotate (quinone route): step 1/1. Catalyzes the conversion of dihydroorotate to orotate with quinone as electron acceptor. The chain is Dihydroorotate dehydrogenase (quinone) from Brucella canis (strain ATCC 23365 / NCTC 10854 / RM-666).